The following is a 317-amino-acid chain: MAELACFCYPHLENDSYKFIPFNNLAIKCMLTAKVDKKDQDKFYNSIIYGIAPPPQFKKRYNTSDNSRGMNYETVMFNKVAVLICEALNSLKVTQSDVANVLSRVVSVRHLENLALRKENHQDVLFHSKELLLKSVLIAIGQSKEIETTATAEGGEIVFQNAAFTMWKLTYLDHELMPILDQNFIEYKITLNEDKPISDVCVKELVAELRWQYNRFAVITHGKGHYRVVKYSSVANHADRVFATYKNITKNGNAIDFNLLDQRIIWQNWYAFTSSMKQGNTLDVCKKLLFQKIKQEKNPFKGLSTDRKMDEVSHVGI.

ATP contacts are provided by residues 107-109 (SVR), lysine 188, and 221-223 (HGK). The segment at 205 to 241 (LVAELRWQYNRFAVITHGKGHYRVVKYSSVANHADRV) is RNA-binding. Histidine 225 serves as the catalytic For NTPase and RTPase activities. Arginine 227 contacts ATP.

The protein belongs to the rotavirus NSP2 family. As to quaternary structure, homooctamer. Interacts with VP1; this interaction is weak. Interacts with NSP5; this interaction leads to up-regulation of NSP5 phosphorylation and formation of viral factories. Interacts with host DCP1A, DCP1B, DDX6, EDC4 and EIF2S1/eIF2-alpha; these interactions are probably part of the sequestration of some host SGs and PBs proteins in viral factories. Mg(2+) is required as a cofactor.

Its subcellular location is the host cytoplasm. Functionally, participates in replication and packaging of the viral genome. Plays a crucial role, together with NSP5, in the formation of virus factories (viroplasms), which are large inclusions in the host cytoplasm where replication intermediates are assembled and viral RNA replication takes place. Displays ssRNA binding, NTPase, RNA triphosphatase (RTPase) and ATP-independent helix-unwinding activities. The unwinding activity may prepare and organize plus-strand RNAs for packaging and replication by removing interfering secondary structures. The RTPase activity plays a role in the removal of the gamma-phosphate from the rotavirus RNA minus strands of dsRNA genome segments. Participates in the selective exclusion of host proteins from stress granules (SG) and P bodies (PB). Also participates in the sequestration of these remodeled organelles in viral factories. This is Non-structural protein 2 from Homo sapiens (Human).